The chain runs to 178 residues: ATP-dependent protease subunit HslV (178 aa).

Residue threonine 7 is part of the active site. Residues glycine 162, cysteine 165, and threonine 168 each contribute to the Na(+) site.

This sequence belongs to the peptidase T1B family. HslV subfamily. A double ring-shaped homohexamer of HslV is capped on each side by a ring-shaped HslU homohexamer. The assembly of the HslU/HslV complex is dependent on binding of ATP.

It is found in the cytoplasm. It catalyses the reaction ATP-dependent cleavage of peptide bonds with broad specificity.. With respect to regulation, allosterically activated by HslU binding. Protease subunit of a proteasome-like degradation complex believed to be a general protein degrading machinery. In Cupriavidus necator (strain ATCC 17699 / DSM 428 / KCTC 22496 / NCIMB 10442 / H16 / Stanier 337) (Ralstonia eutropha), this protein is ATP-dependent protease subunit HslV.